Here is a 159-residue protein sequence, read N- to C-terminus: Putative ribosomal RNA large subunit methyltransferase H (159 aa).

Residues L76, G108, and L127–F132 each bind S-adenosyl-L-methionine.

The protein belongs to the RNA methyltransferase RlmH family.

It is found in the cytoplasm. It catalyses the reaction pseudouridine(1915) in 23S rRNA + S-adenosyl-L-methionine = N(3)-methylpseudouridine(1915) in 23S rRNA + S-adenosyl-L-homocysteine + H(+). Specifically methylates the pseudouridine at position 1915 (m3Psi1915) in 23S rRNA. The chain is Putative ribosomal RNA large subunit methyltransferase H from Methanospirillum hungatei JF-1 (strain ATCC 27890 / DSM 864 / NBRC 100397 / JF-1).